The sequence spans 176 residues: ATP synthase subunit delta (176 aa).

The protein belongs to the ATPase delta chain family. F-type ATPases have 2 components, F(1) - the catalytic core - and F(0) - the membrane proton channel. F(1) has five subunits: alpha(3), beta(3), gamma(1), delta(1), epsilon(1). F(0) has three main subunits: a(1), b(2) and c(10-14). The alpha and beta chains form an alternating ring which encloses part of the gamma chain. F(1) is attached to F(0) by a central stalk formed by the gamma and epsilon chains, while a peripheral stalk is formed by the delta and b chains.

Its subcellular location is the cell inner membrane. Functionally, f(1)F(0) ATP synthase produces ATP from ADP in the presence of a proton or sodium gradient. F-type ATPases consist of two structural domains, F(1) containing the extramembraneous catalytic core and F(0) containing the membrane proton channel, linked together by a central stalk and a peripheral stalk. During catalysis, ATP synthesis in the catalytic domain of F(1) is coupled via a rotary mechanism of the central stalk subunits to proton translocation. In terms of biological role, this protein is part of the stalk that links CF(0) to CF(1). It either transmits conformational changes from CF(0) to CF(1) or is implicated in proton conduction. This is ATP synthase subunit delta from Actinobacillus succinogenes (strain ATCC 55618 / DSM 22257 / CCUG 43843 / 130Z).